The sequence spans 572 residues: Acyl-coenzyme A synthetase ACSM2, mitochondrial (572 aa).

Residues 1-46 (MHWLWKIPRLCTFWGTEMFHRTFHMNIKKLMPIQWGHQEVPAKFNF) constitute a mitochondrion transit peptide. Gln-139 is a CoA binding site. Residues 221–229 (TSGTSGPPK), 359–364 (EIYGQT), Asp-446, and Arg-461 contribute to the ATP site. Thr-364 serves as a coordination point for substrate. 469-471 (SGY) is a CoA binding site. Residue Arg-472 coordinates substrate. CoA-binding positions include Arg-501, Lys-532, and 540–542 (YPR). Lys-557 provides a ligand contact to ATP.

It belongs to the ATP-dependent AMP-binding enzyme family. Monomer. Mg(2+) is required as a cofactor. It depends on Mn(2+) as a cofactor. Detected in kidney, in proximal tubules.

The protein resides in the mitochondrion. It catalyses the reaction a medium-chain fatty acid + ATP + CoA = a medium-chain fatty acyl-CoA + AMP + diphosphate. The enzyme catalyses benzoate + ATP + CoA = benzoyl-CoA + AMP + diphosphate. It carries out the reaction hexanoate + ATP + CoA = hexanoyl-CoA + AMP + diphosphate. The catalysed reaction is butanoate + ATP + CoA = butanoyl-CoA + AMP + diphosphate. It catalyses the reaction octanoate + ATP + CoA = octanoyl-CoA + AMP + diphosphate. The enzyme catalyses decanoate + ATP + CoA = decanoyl-CoA + AMP + diphosphate. In terms of biological role, catalyzes the activation of fatty acids by CoA to produce an acyl-CoA, the first step in fatty acid metabolism. Capable of activating medium-chain fatty acids (e.g. butyric (C4) to decanoic (C10) acids), and certain carboxylate-containing xenobiotics, e.g. benzoate. This Rattus norvegicus (Rat) protein is Acyl-coenzyme A synthetase ACSM2, mitochondrial (Acsm2).